The sequence spans 139 residues: MNFNMSMICFALLLIVTLCSAYSVQQRQADSLRVAEIIRTSQDENTKINRIQELLTIYNRMAPSLRPAERARLDKFISEHTQEVLIDGVPTQGGSRMKIIRKALTPAAKDVATGFFTELGASIASIFTNWFKSSTEPSH.

A signal peptide spans 1-21; the sequence is MNFNMSMICFALLLIVTLCSA.

The protein belongs to the Turandot family.

Its subcellular location is the secreted. A humoral factor that may play a role in stress tolerance. In Drosophila yakuba (Fruit fly), this protein is Protein Turandot B.